The sequence spans 197 residues: MSDNHEEESNVPAYVPGKHVSVDQLKQQDAEDEALKRYKESLLGTGVHAPKDDPRKLVIKEMKIQIEGRPDTIYPLDTKELIKEMKTKPFVLKESCHYKITLTFNIQHDIVSGLKQTNTVYRKGIKVSTEKHMLGSFAPQALAHSVTNPRHGWEEAPSGMLARGSYTAKVVFTDDDNEEHLSVEYAFSIKSDWKSDD.

It belongs to the Rho GDI family. As to quaternary structure, interacts with rac1A, rac1B, rac1C, racB, raCC and RacE.

The protein resides in the cytoplasm. Functionally, regulates the GDP/GTP exchange reaction of the Rho proteins by inhibiting the dissociation of GDP from them, and the subsequent binding of GTP to them. Regulates the Rac-dependent signaling pathways controlling cytokinesis, actin reorganization and the contractile vacuole. Required for efficient accumulation of cap at the cell cortex. The sequence is that of Putative rho GDP-dissociation inhibitor 1 (rdiA) from Dictyostelium discoideum (Social amoeba).